The primary structure comprises 207 residues: Ras-related protein Rab-8A (207 aa).

GTP contacts are provided by Ser17, Gly18, Val19, Gly20, Lys21, Thr22, Cys23, Ser35, Ser39, and Thr40. Thr22 is a binding site for Mg(2+). Short sequence motifs (switch) lie at residues 31–45 (DAFN…GIDF) and 63–80 (DTAG…YYRG). Mg(2+)-binding residues include Thr40 and Asp63. Gly66 serves as a coordination point for GTP. At Thr72 the chain carries Phosphothreonine. Residues Asn121, Lys122, Asp124, Ala152, and Lys153 each coordinate GTP. Phosphoserine is present on residues Ser181 and Ser185. Cys204 bears the Cysteine methyl ester mark. The S-geranylgeranyl cysteine moiety is linked to residue Cys204. The propeptide at 205–207 (VLL) is removed in mature form.

Belongs to the small GTPase superfamily. Rab family. As to quaternary structure, interacts (GTP-bound form) with MICALL1; regulates RAB8A association with recycling endosomes. Interacts with MICALL2; competes with RAB13 and is involved in E-cadherin endocytic recycling. Interacts (GTP-bound form) with MICAL1, MICALCL, MICAL3, EHBP1 and EHBP1L1; at least in case of MICAL1, MICALCL, MICAL3 and EHBP1L1 two molecules of RAB8A can bind to one molecule of the effector protein; ternary complexes of RAB8A, RAB13 and either MICAL1 or EHBP1L1 are possible. Interacts with EHD1. Interacts with MAP4K2 and SYTL4. Interacts with SGSM1 and SGSM3. Interacts with RABIF, RIMS2, RPH3A and RPH3A. Interacts with OPTN. Interacts with RAB3IP, RAB3IP functions as guanine exchange factor (GEF). Interacts with MYO5B. Interacts with CIMAP3. Interacts with BIRC6/bruce. Interacts with OCRL. Interacts with AHI1. Interacts with DCDC1. Interacts with LRRK2; interaction facilitates phosphorylation of Thr-72. Interacts with RAB31P, GDI1, GDI2, CHM, CHML, RABGGTA, RABGGTB, TBC1D15 and INPP5B; these interactions are dependent on Thr-72 not being phosphorylated. Interacts with RILPL1 and RILPL2; these interactions are dependent on the phosphorylation of Thr-72 by LRRK2. Interacts with DZIP1; prevents inhibition by the GDP-dissociation inhibitor GDI2. Interacts (in GDP-bound form) with RAB3IP/Rabin8, RAB3IP functions as guanine exchange factor (GEF) towards RAB8A. Interacts (in GDP-bound form) with RPGR, RPGR functions as GEF towards RAB8A. It depends on Mg(2+) as a cofactor. In terms of processing, phosphorylation of Thr-72 in the switch II region by LRRK2 prevents the association of RAB regulatory proteins, including CHM, CHML and RAB GDP dissociation inhibitors GDI1 and GDI2. Phosphorylation by LRRK2 is required for localization to stressed lysosomes.

The protein resides in the cell membrane. It is found in the golgi apparatus. It localises to the endosome membrane. Its subcellular location is the recycling endosome membrane. The protein localises to the cell projection. The protein resides in the cilium. It is found in the cytoplasmic vesicle. It localises to the phagosome membrane. Its subcellular location is the cytoplasm. The protein localises to the cytoskeleton. The protein resides in the microtubule organizing center. It is found in the centrosome. It localises to the centriole. Its subcellular location is the cilium basal body. The protein localises to the midbody. The protein resides in the lysosome. The enzyme catalyses GTP + H2O = GDP + phosphate + H(+). Its activity is regulated as follows. Regulated by guanine nucleotide exchange factors (GEFs) such as RAB3IP/Rabin8 and RPGR which promote the exchange of bound GDP for free GTP, GTPase activating proteins (GAPs) which increase the GTP hydrolysis activity, and GDP dissociation inhibitors (GDIs) which inhibit the dissociation of the nucleotide from the GTPase. Activated in response to insulin. Functionally, the small GTPases Rab are key regulators of intracellular membrane trafficking, from the formation of transport vesicles to their fusion with membranes. Rabs cycle between an inactive GDP-bound form and an active GTP-bound form that is able to recruit to membranes different sets of downstream effectors directly responsible for vesicle formation, movement, tethering and fusion. RAB8A is involved in polarized vesicular trafficking and neurotransmitter release. Together with RAB11A, RAB3IP, the exocyst complex, PARD3, PRKCI, ANXA2, CDC42 and DNMBP promotes transcytosis of PODXL to the apical membrane initiation sites (AMIS), apical surface formation and lumenogenesis. Regulates the compacted morphology of the Golgi. Together with MYO5B and RAB11A participates in epithelial cell polarization. Also involved in membrane trafficking to the cilium and ciliogenesis. Together with MICALL2, may also regulate adherens junction assembly. May play a role in insulin-induced transport to the plasma membrane of the glucose transporter GLUT4 and therefore play a role in glucose homeostasis. Involved in autophagy. Participates in the export of a subset of neosynthesized proteins through a Rab8-Rab10-Rab11-dependent endososomal export route. Targeted to and stabilized on stressed lysosomes through LRRK2 phosphorylation. Suppresses stress-induced lysosomal enlargement through EHBP1 and EHNP1L1 effector proteins. The sequence is that of Ras-related protein Rab-8A (RAB8A) from Pongo abelii (Sumatran orangutan).